The following is a 513-amino-acid chain: Carboxyethyl-arginine beta-lactam-synthase (513 aa).

The Mg(2+) site is built by D253 and D351.

The protein belongs to the asparagine synthetase family. In terms of assembly, homodimer. Requires Mg(2+) as cofactor.

It carries out the reaction N(2)-(2-carboxyethyl)-L-arginine + ATP = deoxyamidinoproclavaminate + AMP + diphosphate + H(+). It participates in antibiotic biosynthesis; clavulanate biosynthesis; clavulanate from D-glyceraldehyde 3-phosphate and L-arginine: step 2/8. The protein is Carboxyethyl-arginine beta-lactam-synthase (bls) of Streptomyces clavuligerus.